Here is an 866-residue protein sequence, read N- to C-terminus: MNKDVSQHTPMMQQYLQLKAQHPDILLFYRMGDFYELFYEDAKKAAVLLDISLTKRGASAGEPIPMAGVPYHAVEGYLAKLVALGESVAICEQIGEVGASKGPVERKVVRIVTPGTVSDEALLPERQDNLVAAICEQKGVFAIATLDMTSGRFLISELANKTALMAELQRVMPAEILYPEDFAYIPMLNNYKGLRRRPCWEFELVTAIQLLNRQFGTQCLDGFGVQQAKVALCAAGCVLHYAQETQRTALPHINSIHLSQDSEMVLLDAATRRNLELTQNLAGGTEATLASVLDKCVTPMGSRLLKRWIHQPIRQLDILKSRQDMIATLQQYEQIEPLQPLLRNVGDMERILARIALRSARPRDLTRLRTALAQLPLIAKCTQNLGACLAVLLSKNADFSELYTLLEQAIIETPPQLIRDGGVIAEGYHAELDEWRTLSAGATQYLDNLEIRERESTGIDTLKIGFNAVQGYYIQISQAQAHKAPIHYVRRQTLKNAERYIIPELKTYEDKVLKAKGAALALEKQLYEQLFDLIMPHLGALQQTAMALSELDVLVNLAERAESLHYVRPSFSLQRGINIKAGRHPVVEHVMVEPFIANTVFLNSQRHLLIVTGPNMGGKSTYMRQTALICLMAYIGSFVPAESAEIGVIDRIFTRIGASDDLASGRSTFMVEMTEMANILHQATAQSVVLIDEIGRGTSTYDGLALACACAEWLANKTQSLTLFATHYFELTSLPSQLKGVANVHLDACEYNDTIAFMHSVQEGAASKSYGLAVAALAGVPKQVIALAKQRLVHLEEFSQQTKMAQQHPQADLLFTVEMPEEEKMAPLAKAESAVELALRAITPDELTPRQALDELYRLKKLLSSS.

Residue 613 to 620 participates in ATP binding; that stretch reads GPNMGGKS.

Belongs to the DNA mismatch repair MutS family.

In terms of biological role, this protein is involved in the repair of mismatches in DNA. It is possible that it carries out the mismatch recognition step. This protein has a weak ATPase activity. This is DNA mismatch repair protein MutS from Haemophilus ducreyi (strain 35000HP / ATCC 700724).